Reading from the N-terminus, the 409-residue chain is Arginine/serine-rich coiled-coil protein 2 (409 aa).

Residues 1-31 (MASSDTERDGGSPEKHSPVTDKHLEHSDLAK) show a composition bias toward basic and acidic residues. The segment at 1 to 204 (MASSDTERDG…PSPPAFRGRN (204 aa)) is disordered. Over residues 34 to 50 (RGLKHYSKSRSRSREHK) the composition is skewed to basic residues. The segment covering 64 to 108 (RSKEARRHEVKEKSSKKHRPDDSIDRDHSDKVRERLNSSENGEER) has biased composition (basic and acidic residues). Positions 109–191 (HRRKEKRSSR…KPRRHSRSRS (83 aa)) are enriched in basic residues. A coiled-coil region spans residues 204–244 (NTAMDAQEALARRLERAKKLQEQREKEMADKQKQQETVAVA).

It belongs to the RSRC2 family.

The polypeptide is Arginine/serine-rich coiled-coil protein 2 (rsrc2) (Xenopus tropicalis (Western clawed frog)).